The primary structure comprises 314 residues: Taste receptor type 2 member 42 (314 aa).

The Extracellular segment spans residues 1-7; it reads MATELDK. The chain crosses the membrane as a helical span at residues 8–28; it reads IFLILAIAEFIISMLGNVFIG. At 29–50 the chain is on the cytoplasmic side; it reads LVNCSEGIKNQKVFSADFILTC. A helical transmembrane segment spans residues 51-71; that stretch reads LAISTIGQLLVILFDSFLVGL. The Extracellular segment spans residues 72–101; sequence ASHLYTTYRLGKTVIMLWHMTNHLTTWLAT. Residues 102–122 traverse the membrane as a helical segment; it reads CLSIFYFFKIAHFPHSLFLWL. Residues 123–127 are Cytoplasmic-facing; sequence RWRMN. Residues 128 to 148 form a helical membrane-spanning segment; the sequence is GMIVMLLILSLFLLIFDSLVL. Over 149 to 187 the chain is Extracellular; sequence EIFIDISLNIIDKSNLTLYLDESKTLYDKLSILKTLLSL. Residue Asn-163 is glycosylated (N-linked (GlcNAc...) asparagine). A helical membrane pass occupies residues 188–208; sequence TSFIPFSLFLTSLLFLFLSLV. At 209–238 the chain is on the cytoplasmic side; the sequence is RHTRNLKLSSLGSRDSSTEAHRRAMKMVMS. A helical membrane pass occupies residues 239 to 259; that stretch reads FLFLFIVHFFSLQVANWIFFM. Residues 260 to 265 lie on the Extracellular side of the membrane; sequence LWNNKC. The helical transmembrane segment at 266–286 threads the bilayer; that stretch reads IKFVMLALNAFPSCHSFILIL. At 287-314 the chain is on the cytoplasmic side; that stretch reads GNSKLQQTAVRLLWHLRNYTKTPNPLPL.

Belongs to the G-protein coupled receptor T2R family.

The protein localises to the membrane. In terms of biological role, receptor that may play a role in the perception of bitterness and is gustducin-linked. May play a role in sensing the chemical composition of the gastrointestinal content. The activity of this receptor may stimulate alpha gustducin, mediate PLC-beta-2 activation and lead to the gating of TRPM5. The chain is Taste receptor type 2 member 42 (TAS2R42) from Homo sapiens (Human).